The chain runs to 309 residues: Branched-chain-amino-acid aminotransferase (309 aa).

At Lys160 the chain carries N6-(pyridoxal phosphate)lysine.

Belongs to the class-IV pyridoxal-phosphate-dependent aminotransferase family. Homohexamer. Pyridoxal 5'-phosphate is required as a cofactor.

The enzyme catalyses L-leucine + 2-oxoglutarate = 4-methyl-2-oxopentanoate + L-glutamate. It carries out the reaction L-isoleucine + 2-oxoglutarate = (S)-3-methyl-2-oxopentanoate + L-glutamate. The catalysed reaction is L-valine + 2-oxoglutarate = 3-methyl-2-oxobutanoate + L-glutamate. The protein operates within amino-acid biosynthesis; L-isoleucine biosynthesis; L-isoleucine from 2-oxobutanoate: step 4/4. It functions in the pathway amino-acid biosynthesis; L-leucine biosynthesis; L-leucine from 3-methyl-2-oxobutanoate: step 4/4. It participates in amino-acid biosynthesis; L-valine biosynthesis; L-valine from pyruvate: step 4/4. Functionally, acts on leucine, isoleucine and valine. The polypeptide is Branched-chain-amino-acid aminotransferase (ilvE) (Escherichia coli O157:H7).